Reading from the N-terminus, the 175-residue chain is Universal stress protein A-like protein (175 aa).

Residues Ala-11, Val-12, Asn-13, Ser-26, Cys-27, Val-53, Gly-131, Arg-133, Thr-145, Val-146, and Ser-147 each contribute to the AMP site.

It belongs to the universal stress protein A family. Homohexamer.

In Arabidopsis thaliana (Mouse-ear cress), this protein is Universal stress protein A-like protein.